A 525-amino-acid chain; its full sequence is ATP synthase subunit alpha (525 aa).

171 to 178 (GDRQTGKS) is an ATP binding site.

Belongs to the ATPase alpha/beta chains family. F-type ATPases have 2 components, CF(1) - the catalytic core - and CF(0) - the membrane proton channel. CF(1) has five subunits: alpha(3), beta(3), gamma(1), delta(1), epsilon(1). CF(0) has three main subunits: a(1), b(2) and c(9-12). The alpha and beta chains form an alternating ring which encloses part of the gamma chain. CF(1) is attached to CF(0) by a central stalk formed by the gamma and epsilon chains, while a peripheral stalk is formed by the delta and b chains.

It localises to the cell inner membrane. The enzyme catalyses ATP + H2O + 4 H(+)(in) = ADP + phosphate + 5 H(+)(out). Produces ATP from ADP in the presence of a proton gradient across the membrane. The alpha chain is a regulatory subunit. The chain is ATP synthase subunit alpha from Flavobacterium psychrophilum (strain ATCC 49511 / DSM 21280 / CIP 103535 / JIP02/86).